We begin with the raw amino-acid sequence, 292 residues long: 1D-myo-inositol 2-acetamido-2-deoxy-alpha-D-glucopyranoside deacetylase (292 aa).

H11, D14, and H146 together coordinate Zn(2+).

This sequence belongs to the MshB deacetylase family. Zn(2+) is required as a cofactor.

It catalyses the reaction 1D-myo-inositol 2-acetamido-2-deoxy-alpha-D-glucopyranoside + H2O = 1D-myo-inositol 2-amino-2-deoxy-alpha-D-glucopyranoside + acetate. Functionally, catalyzes the deacetylation of 1D-myo-inositol 2-acetamido-2-deoxy-alpha-D-glucopyranoside (GlcNAc-Ins) in the mycothiol biosynthesis pathway. In Acidothermus cellulolyticus (strain ATCC 43068 / DSM 8971 / 11B), this protein is 1D-myo-inositol 2-acetamido-2-deoxy-alpha-D-glucopyranoside deacetylase.